Here is a 33-residue protein sequence, read N- to C-terminus: Cyanophlyctin-beta (33 aa).

Cys-27 and Cys-33 form a disulfide bridge.

Expressed by the skin glands.

It localises to the secreted. Antimicrobial peptide active against E.coli (MIC=5 uM), K.pneumoniae (MIC=10 uM), B.cereus (MIC=7 uM) and S.aureus (MIC=12 uM). Has very little hemolytic activity. The protein is Cyanophlyctin-beta of Euphlyctis cyanophlyctis (Skittering frog).